Here is a 105-residue protein sequence, read N- to C-terminus: MPIVTVTLNNKSFQLYCNNGDEEKVLSLADKLNDKIAEIKLSSPTASFDLLLVMASLNAQAEIAILTEKLYKNGFQNNNHEEEKFAETLTTIASYLENLARKMEK.

This is an uncharacterized protein from Rickettsia prowazekii (strain Madrid E).